Consider the following 320-residue polypeptide: Small ribosomal subunit protein mS35 (320 aa).

Residues 24 to 63 (SVASPAAPRAGPRTASRSERPMRRKALPPRTEKMDTDQDW) are disordered.

Belongs to the mitochondrion-specific ribosomal protein mS35 family. As to quaternary structure, component of the mitochondrial ribosome small subunit (28S) which comprises a 12S rRNA and about 30 distinct proteins.

It is found in the mitochondrion. The chain is Small ribosomal subunit protein mS35 from Mus musculus (Mouse).